Reading from the N-terminus, the 492-residue chain is Probable G-protein coupled receptor Mth-like 8 (492 aa).

The first 21 residues, 1–21, serve as a signal peptide directing secretion; that stretch reads MAQFCILGVLLILSGTHCSWG. Residues 22–218 are Extracellular-facing; it reads FHEETHYPCA…FVLGVREWTY (197 aa). Intrachain disulfides connect Cys-30–Cys-82, Cys-84–Cys-89, Cys-93–Cys-184, and Cys-94–Cys-107. N-linked (GlcNAc...) asparagine glycans are attached at residues Asn-37 and Asn-51. 3 N-linked (GlcNAc...) asparagine glycosylation sites follow: Asn-129, Asn-169, and Asn-192. The chain crosses the membrane as a helical span at residues 219 to 239; that stretch reads AICLLIAILSMFIVLMVYLMC. Topologically, residues 240–245 are cytoplasmic; the sequence is SEMRNS. The chain crosses the membrane as a helical span at residues 246 to 266; it reads FYGVAIKAYAICMILGYALLA. Residues 267–282 lie on the Extracellular side of the membrane; sequence YLTLHNPANLSNAACR. A glycan (N-linked (GlcNAc...) asparagine) is linked at Asn-275. The chain crosses the membrane as a helical span at residues 283-303; it reads ILPSLALMNLVLSFYILSFIA. The Cytoplasmic segment spans residues 304-317; sequence FKLYLSFYGVVFTK. The chain crosses the membrane as a helical span at residues 318-338; the sequence is LMFWLIFTPIVLVAVGWSFFV. The Extracellular segment spans residues 339-362; it reads GFSYYGSRLIFGGDTCWFDPRNWS. The N-linked (GlcNAc...) asparagine glycan is linked to Asn-360. A helical transmembrane segment spans residues 363 to 383; sequence VMIYFYAPVFVACAISGFFYV. Topologically, residues 384–411 are cytoplasmic; that stretch reads LSQIYIRDQPDIETEKSFESIEKNRFKS. A helical membrane pass occupies residues 412–432; the sequence is FWKYFGYTAVVWVVCICSFAF. The Extracellular portion of the chain corresponds to 433–441; that stretch reads NYYWENRSH. Residue Asn-438 is glycosylated (N-linked (GlcNAc...) asparagine). A helical transmembrane segment spans residues 442–462; that stretch reads LNYAVSFCMAFHGFAALYALI. The Cytoplasmic portion of the chain corresponds to 463–492; that stretch reads GKNQQIQNFLRRIDNGEDTCENSVPLSSFG.

It belongs to the G-protein coupled receptor 2 family. Mth subfamily.

Its subcellular location is the cell membrane. The protein is Probable G-protein coupled receptor Mth-like 8 (mthl8) of Drosophila melanogaster (Fruit fly).